The chain runs to 779 residues: Pleckstrin homology domain-containing family A member 4 (779 aa).

Residues P54–R153 enclose the PH domain. Disordered regions lie at residues S152–P352, A492–R670, and M691–D764. S164 is modified (phosphoserine). The segment covering S184–E193 has biased composition (basic and acidic residues). A compositionally biased stretch (polar residues) spans Q315–Y332. The segment covering P525–S535 has biased composition (low complexity). Basic and acidic residues predominate over residues P536–A551. Residue S559 is modified to Phosphoserine. The segment covering Q594–E603 has biased composition (basic and acidic residues). Positions L647–L663 are enriched in polar residues. The segment covering P704–P724 has biased composition (pro residues).

As to expression, highly expressed in melanoma. Detected at low levels in heart, skeletal muscle, kidney, liver and small intestine.

It is found in the cytoplasm. The protein localises to the membrane. Functionally, binds specifically to phosphatidylinositol 3-phosphate (PtdIns3P), but not to other phosphoinositides. In Homo sapiens (Human), this protein is Pleckstrin homology domain-containing family A member 4 (PLEKHA4).